Here is a 105-residue protein sequence, read N- to C-terminus: Large ribosomal subunit protein uL24 (105 aa).

Belongs to the universal ribosomal protein uL24 family. In terms of assembly, part of the 50S ribosomal subunit.

Its function is as follows. One of two assembly initiator proteins, it binds directly to the 5'-end of the 23S rRNA, where it nucleates assembly of the 50S subunit. In terms of biological role, one of the proteins that surrounds the polypeptide exit tunnel on the outside of the subunit. This Clostridium kluyveri (strain ATCC 8527 / DSM 555 / NBRC 12016 / NCIMB 10680 / K1) protein is Large ribosomal subunit protein uL24.